Consider the following 126-residue polypeptide: Aspartate 1-decarboxylase (126 aa).

The active-site Schiff-base intermediate with substrate; via pyruvic acid is the Ser25. Ser25 carries the post-translational modification Pyruvic acid (Ser). Thr57 lines the substrate pocket. Tyr58 (proton donor) is an active-site residue. Position 73–75 (73–75 (GAA)) interacts with substrate.

The protein belongs to the PanD family. As to quaternary structure, heterooctamer of four alpha and four beta subunits. It depends on pyruvate as a cofactor. Post-translationally, is synthesized initially as an inactive proenzyme, which is activated by self-cleavage at a specific serine bond to produce a beta-subunit with a hydroxyl group at its C-terminus and an alpha-subunit with a pyruvoyl group at its N-terminus.

It localises to the cytoplasm. The enzyme catalyses L-aspartate + H(+) = beta-alanine + CO2. Its pathway is cofactor biosynthesis; (R)-pantothenate biosynthesis; beta-alanine from L-aspartate: step 1/1. Catalyzes the pyruvoyl-dependent decarboxylation of aspartate to produce beta-alanine. This chain is Aspartate 1-decarboxylase, found in Nitrosococcus oceani (strain ATCC 19707 / BCRC 17464 / JCM 30415 / NCIMB 11848 / C-107).